The chain runs to 183 residues: Pectinesterase inhibitor 8 (183 aa).

Positions 1–30 (MAQRASRRPAAAAAAVVVAVVLAVSGGVGA) are cleaved as a signal peptide. 2 disulfide bridges follow: Cys36/Cys51 and Cys107/Cys147.

Belongs to the PMEI family.

Its subcellular location is the secreted. The protein localises to the extracellular space. It localises to the apoplast. Its function is as follows. Pectin methylesterase (PME) inhibitor that inhibits PME in vitro. The polypeptide is Pectinesterase inhibitor 8 (Oryza sativa subsp. japonica (Rice)).